Reading from the N-terminus, the 212-residue chain is uncharacterized protein (212 aa).

Positions 1–21 (MRRLTAFGLALLLLASGVARG) are cleaved as a signal peptide.

To E.coli YfaT and T.maritima TM0986.

This is an uncharacterized protein from Pseudomonas aeruginosa (strain ATCC 15692 / DSM 22644 / CIP 104116 / JCM 14847 / LMG 12228 / 1C / PRS 101 / PAO1).